The sequence spans 186 residues: ATP synthase subunit delta, cyanelle (186 aa).

Belongs to the ATPase delta chain family. In terms of assembly, F-type ATPases have 2 components, F(1) - the catalytic core - and F(0) - the membrane proton channel. F(1) has five subunits: alpha(3), beta(3), gamma(1), delta(1), epsilon(1). CF(0) has four main subunits: a(1), b(1), b'(1) and c(10-14). The alpha and beta chains form an alternating ring which encloses part of the gamma chain. F(1) is attached to F(0) by a central stalk formed by the gamma and epsilon chains, while a peripheral stalk is formed by the delta, b and b' chains.

Its subcellular location is the plastid. The protein localises to the cyanelle thylakoid membrane. In terms of biological role, f(1)F(0) ATP synthase produces ATP from ADP in the presence of a proton or sodium gradient. F-type ATPases consist of two structural domains, F(1) containing the extramembraneous catalytic core and F(0) containing the membrane proton channel, linked together by a central stalk and a peripheral stalk. During catalysis, ATP synthesis in the catalytic domain of F(1) is coupled via a rotary mechanism of the central stalk subunits to proton translocation. Functionally, this protein is part of the stalk that links CF(0) to CF(1). It either transmits conformational changes from CF(0) to CF(1) or is implicated in proton conduction. The sequence is that of ATP synthase subunit delta, cyanelle from Cyanophora paradoxa.